The following is a 57-amino-acid chain: UPF0509 protein YciZ (57 aa).

This sequence belongs to the UPF0509 family.

The sequence is that of UPF0509 protein YciZ (yciZ) from Escherichia coli O157:H7.